A 282-amino-acid polypeptide reads, in one-letter code: Phosphate import ATP-binding protein PstB (282 aa).

The region spanning 36 to 277 is the ABC transporter domain; sequence IEVKNLNFFY…PARKETEDYI (242 aa). 68 to 75 provides a ligand contact to ATP; that stretch reads GPSGCGKS.

The protein belongs to the ABC transporter superfamily. Phosphate importer (TC 3.A.1.7) family. The complex is composed of two ATP-binding proteins (PstB), two transmembrane proteins (PstC and PstA) and a solute-binding protein (PstS).

It localises to the cell inner membrane. It catalyses the reaction phosphate(out) + ATP + H2O = ADP + 2 phosphate(in) + H(+). In terms of biological role, part of the ABC transporter complex PstSACB involved in phosphate import. Responsible for energy coupling to the transport system. The chain is Phosphate import ATP-binding protein PstB from Burkholderia pseudomallei (strain 1710b).